The chain runs to 556 residues: uncharacterized protein (556 aa).

Residues 16 to 36 form a helical membrane-spanning segment; it reads LFWTIGVLGAGALTTFSAVMI.

The protein resides in the membrane. This is an uncharacterized protein from Mycoplasma genitalium (strain ATCC 33530 / DSM 19775 / NCTC 10195 / G37) (Mycoplasmoides genitalium).